The sequence spans 163 residues: Thiol peroxidase (163 aa).

The Thioredoxin domain occupies 16–162 (LQVGDTAHDF…YDAAIAAVKN (147 aa)). Residue C58 is the Cysteine sulfenic acid (-SOH) intermediate of the active site. Cysteines 58 and 92 form a disulfide.

This sequence belongs to the peroxiredoxin family. Tpx subfamily. Homodimer.

The catalysed reaction is a hydroperoxide + [thioredoxin]-dithiol = an alcohol + [thioredoxin]-disulfide + H2O. Its function is as follows. Thiol-specific peroxidase that catalyzes the reduction of hydrogen peroxide and organic hydroperoxides to water and alcohols, respectively. Plays a role in cell protection against oxidative stress by detoxifying peroxides. This chain is Thiol peroxidase, found in Streptococcus gordonii.